A 137-amino-acid chain; its full sequence is MPTINQLVKTNRKAKTWKTKAPALNRGVNSLKKKVTKVSAPQKRGVCTRVATMTPKKPNSALRKYARVRLTNGMEVNAYIPGEGHNLQEHSVVLIRGGRVKDLPGVRYHIIRGTLDTQAVNNRKQSRSLYGAKRPKK.

Residue Asp-102 is modified to 3-methylthioaspartic acid.

Belongs to the universal ribosomal protein uS12 family. As to quaternary structure, part of the 30S ribosomal subunit. Contacts proteins S8 and S17. May interact with IF1 in the 30S initiation complex.

With S4 and S5 plays an important role in translational accuracy. In terms of biological role, interacts with and stabilizes bases of the 16S rRNA that are involved in tRNA selection in the A site and with the mRNA backbone. Located at the interface of the 30S and 50S subunits, it traverses the body of the 30S subunit contacting proteins on the other side and probably holding the rRNA structure together. The combined cluster of proteins S8, S12 and S17 appears to hold together the shoulder and platform of the 30S subunit. The sequence is that of Small ribosomal subunit protein uS12 from Mesoplasma florum (strain ATCC 33453 / NBRC 100688 / NCTC 11704 / L1) (Acholeplasma florum).